A 359-amino-acid polypeptide reads, in one-letter code: HTH-type transcriptional regulator Rv3575c (359 aa).

Residues 9–64 (ATLASLAAELKVSRTTVSNAFNRPDQLSADLRERVLATAKRLGYAGPDPVARSLRT) enclose the HTH lacI-type domain. Residues 11 to 30 (LASLAAELKVSRTTVSNAFN) constitute a DNA-binding region (H-T-H motif).

Transcriptional regulator that negatively regulates transcription of the mce4 operon, which is involved in cholesterol transport and utilization. Acts by binding to the promoter region of the mce4 operon. It affects the utilization of host cholesterol as a carbon source, impacting the host's innate immune response. In Mycobacterium tuberculosis (strain ATCC 25618 / H37Rv), this protein is HTH-type transcriptional regulator Rv3575c.